The primary structure comprises 539 residues: Membrane protein insertase YidC (539 aa).

Residues 6–26 (VILAVALSFAVLLGWQFLFPP) form a helical membrane-spanning segment. Residues 28–63 (PQQPAPAQQEQTAQPNQAVDSSVAGPVSNQLPDPAS) form a disordered region. The span at 32–45 (APAQQEQTAQPNQA) shows a compositional bias: low complexity. The span at 54–63 (VSNQLPDPAS) shows a compositional bias: polar residues. The next 3 helical transmembrane spans lie at 349-369 (YGIAIILLTIVIKILFWPLSH), 421-441 (MLLQIPVFFGLYKALMGTVAL), and 496-516 (IMMFLPLVFTFMFLNFPSGLV).

It belongs to the OXA1/ALB3/YidC family. Type 1 subfamily. Interacts with the Sec translocase complex via SecD. Specifically interacts with transmembrane segments of nascent integral membrane proteins during membrane integration.

It localises to the cell inner membrane. In terms of biological role, required for the insertion and/or proper folding and/or complex formation of integral membrane proteins into the membrane. Involved in integration of membrane proteins that insert both dependently and independently of the Sec translocase complex, as well as at least some lipoproteins. Aids folding of multispanning membrane proteins. The chain is Membrane protein insertase YidC from Maridesulfovibrio salexigens (strain ATCC 14822 / DSM 2638 / NCIMB 8403 / VKM B-1763) (Desulfovibrio salexigens).